Reading from the N-terminus, the 726-residue chain is Catalase-peroxidase (726 aa).

A signal peptide spans 1 to 16 (MDNPTDSAGKCPVAHG). The interval 1–26 (MDNPTDSAGKCPVAHGNTPRSRSNRD) is disordered. The segment at residues 96 to 218 (WHSAGTYRIT…LGAVQMGLIY (123 aa)) is a cross-link (tryptophyl-tyrosyl-methioninium (Trp-Tyr) (with M-244)). His-97 serves as the catalytic Proton acceptor. A cross-link (tryptophyl-tyrosyl-methioninium (Tyr-Met) (with W-96)) is located at residues 218–244 (YVNPEGPNGTPDPLASARDIRETFARM). A heme b-binding site is contributed by His-259.

The protein belongs to the peroxidase family. Peroxidase/catalase subfamily. As to quaternary structure, homodimer or homotetramer. It depends on heme b as a cofactor. In terms of processing, formation of the three residue Trp-Tyr-Met cross-link is important for the catalase, but not the peroxidase activity of the enzyme.

The catalysed reaction is H2O2 + AH2 = A + 2 H2O. It catalyses the reaction 2 H2O2 = O2 + 2 H2O. Its function is as follows. Bifunctional enzyme with both catalase and broad-spectrum peroxidase activity. This is Catalase-peroxidase from Rhizobium johnstonii (strain DSM 114642 / LMG 32736 / 3841) (Rhizobium leguminosarum bv. viciae).